The chain runs to 192 residues: Orotate phosphoribosyltransferase (192 aa).

116–124 serves as a coordination point for 5-phospho-alpha-D-ribose 1-diphosphate; sequence EDIVTTGLS. Residues Thr120 and Arg148 each contribute to the orotate site.

It belongs to the purine/pyrimidine phosphoribosyltransferase family. PyrE subfamily. In terms of assembly, homodimer. Mg(2+) serves as cofactor.

The enzyme catalyses orotidine 5'-phosphate + diphosphate = orotate + 5-phospho-alpha-D-ribose 1-diphosphate. The protein operates within pyrimidine metabolism; UMP biosynthesis via de novo pathway; UMP from orotate: step 1/2. Catalyzes the transfer of a ribosyl phosphate group from 5-phosphoribose 1-diphosphate to orotate, leading to the formation of orotidine monophosphate (OMP). In Brucella anthropi (strain ATCC 49188 / DSM 6882 / CCUG 24695 / JCM 21032 / LMG 3331 / NBRC 15819 / NCTC 12168 / Alc 37) (Ochrobactrum anthropi), this protein is Orotate phosphoribosyltransferase.